The sequence spans 307 residues: MSLRHFLTLSDFTKQELENLIKRASELRKMQHAGEIYQPFVGRTLGMIFEKSSTRTRISFETGMGQFGGNAIFLSPNDTQLGRGEPLEDSARVISSMVDIIMIRTFGHEKVETFAKYSSVPIINALTDEFHPCQLLADMQTYYEHRGSIENKIVTWVGDGNNMCASFMQAAHQFGFELRVAAPYGFEPDSALMERFSHCVSLVENVQDAAKDSNLIVTDVWASMGQESEQNTRARRFAPYQVTPSLLDKADPEVVFMHCLPAHRGEEISHDMLDDPRSVVWDEAENRLHAQKALMEFLLKDKIKLPA.

Residues 53–56 (STRT), Q80, R104, and 131–134 (HPCQ) contribute to the carbamoyl phosphate site. L-ornithine contacts are provided by residues N162, D219, and 223 to 224 (SM). Residues 259 to 260 (CL) and R287 each bind carbamoyl phosphate.

Belongs to the aspartate/ornithine carbamoyltransferase superfamily. OTCase family.

The protein localises to the cytoplasm. It catalyses the reaction carbamoyl phosphate + L-ornithine = L-citrulline + phosphate + H(+). The protein operates within amino-acid biosynthesis; L-arginine biosynthesis; L-arginine from L-ornithine and carbamoyl phosphate: step 1/3. Functionally, reversibly catalyzes the transfer of the carbamoyl group from carbamoyl phosphate (CP) to the N(epsilon) atom of ornithine (ORN) to produce L-citrulline. The protein is Ornithine carbamoyltransferase of Psychrobacter arcticus (strain DSM 17307 / VKM B-2377 / 273-4).